We begin with the raw amino-acid sequence, 586 residues long: uncharacterized protein (586 aa).

The region spanning 29 to 312 is the ABC transmembrane type-1 domain; it reads YGIAIGSMVV…LARMRISLES (284 aa). 4 helical membrane passes run 30–50, 66–86, 162–184, and 256–276; these read GIAIGSMVVVAVMTSASAWIM, VFGVAVTVAIIFAVKGLATYV, MVIQQPLLSLVSAAVGPGAILGV, and IMETLSGFAIAGVIALSGVLV. Residues 346-580 enclose the ABC transporter domain; sequence IRFKDVNFSY…DGVYRRLYEL (235 aa). 379–386 contacts ATP; it reads GPSGAGKS.

This sequence belongs to the ABC transporter superfamily.

It is found in the cell membrane. This is an uncharacterized protein from Sinorhizobium fredii (strain NBRC 101917 / NGR234).